Here is a 231-residue protein sequence, read N- to C-terminus: Staphylococcal superantigen-like 7 (231 aa).

An N-terminal signal peptide occupies residues 1 to 30 (MKLKTLAKATLALGLLTTGVITSEGQAVQA).

It belongs to the staphylococcal/streptococcal toxin family. Interacts with host IgA and complement C5; these interactions inhibits complement activation.

The protein resides in the secreted. Plays a role in the inhibition of host complement-mediated lysis and serum bactericidal activity by interacting with complement component C5. Affects all three pathways of complement activation and inhibits the cleavage of C5 by preventing its binding to C5 convertases. In turn, prevents C5a-mediated neutrophil migration. This is Staphylococcal superantigen-like 7 from Staphylococcus aureus (strain NCTC 8325 / PS 47).